The sequence spans 1840 residues: MDVHTRWKAPRPGAPLLSSPLLLLLLLLWAPPPSRAAQPTDLLEMLDFHNLPSGVTKTTGFCATRRSSKEPDVAYRVSKDAQLSMPTKQLYPESDFPEDFSILTTVKAKKGSQAFLVSVYNEQGIQQLGLELGRSPVFLYEDHTGKPGPEEYPLFPGINLSDGKWHRIAISVYKKNVTLILDCKKKITKFLNRGDHPIIDVNGIIMFGSRILDDEIFEGDIQQLLFVSDHRAAYDYCEHYSPDCDTAVPDTPQSQDPNPDEYYPEGEGETYYYEYPYYEDPEDPGKEPAPSQKPVEAARETTEVPEEQTQPPSEAPTVPETSDTAGKEDNPGIGDYDYVPTDDYYTTSPYEDFGYGEGVENPDQPTNPDSGAEIPTSTSVTSNSSNPAPSPEEGKDDLGGEFTEETIKNLDENYYDPYFDPDSDSNVSPSEIGPGMPANQDTIYEGIGGPRGEKGQKGEPAIIEPGMLIEGPPGPEGPAGLPGPPGTTGPTGQMGDPGERGPPGRPGLPGADGLPGPPGTMLMLPFRFGGGGDAGSKGPMVSAQESQAQAILQQARLALRGPAGPMGLTGRPGPMGPPGSGGLKGEPGDMGPQGPRGVQGPPGPTGKPGRRGRAGSDGARGMPGQTGPKGDRGFDGLAGLPGEKGHRGDPGPSGPPGLPGDDGERGDDGEVGPRGLPGEPGPRGLLGPKGPPGPPGPPGVTGMDGQPGPKGNVGPQGEPGPPGQQGNPGAQGLPGPQGAIGPPGEKGPLGKPGLPGMPGADGPPGHPGKEGPPGEKGGQGPPGPQGPIGYPGPRGVKGADGIRGLKGTKGEKGEDGFPGFKGDMGIKGDRGEIGPPGPRGEDGPEGPKGRGGPNGDPGPLGPTGEKGKLGVPGLPGYPGRQGPKGSIGFPGFPGANGEKGGRGTPGKPGPRGQRGPTGPRGERGPRGITGKPGPKGNSGGDGPAGPPGERGPNGPQGPTGFPGPKGPPGPPGKDGLPGHPGQRGETGFQGKTGPPGPPGVVGPQGPTGETGPMGERGHPGPPGPPGEQGLPGAAGKEGTKGDPGPAGLPGKDGPPGLRGFPGDRGLPGPVGALGLKGSEGPPGPPGPAGSPGERGPAGAAGPIGIPGRPGPQGPPGPAGEKGVPGEEGPQGPAGRDGLQGPVGLPGPAGPVGPPGEDGDKGEIGEPGQKGSKGDKGEQGPPGPTGPQGPTGQPGPSGADGEPGPRGQQGLFGQKGDEGSRGFPGPPGPVGLQGLPGPPGEKGETGDVGQMGPPGPPGPRGPSGAPGADGPQGPPGGIGNPGAVGEKGEPGEAGEPGLPGEGGPLGPKGERGEKGEAGPSGAAGPPGPKGPPGDDGPKGSPGPVGFPGDPGPPGEPGPAGQDGPPGDKGDDGEPGQTGSPGPTGEPGPSGPPGKRGPPGPAGPEGRQGEKGAKGEAGLEGPPGKTGPIGPQGAPGKPGPDGLRGIPGPVGEQGLPGSPGPDGPPGPMGPPGLPGLKGDSGPKGEKGHPGLIGLIGPPGEQGEKGDRGLPGPQGSSGPKGEQGITGPSGPLGPPGPPGLPGPPGPKGAKGSSGPTGPKGEAGHPGLPGPPGPPGEVIQPLPIQASRTRRNIDASQLLDDGAGESYVDYADGMEEIFGSLNSLKLEIEQMKRPLGTQQNPARTCKDLQLCHPDFPDGEYWVDPNQGCSRDSFKVYCNFTAGGSTCVFPDKKSEGARITSWPKENPGSWFSEFKRGKLLSYVDAEGNPVGVVQMTFLRLLSASAQQNITYNCYQSVAWQDAATGSYDKAIRFLGSNDEEMSYDNNPYIRALVDGCATKKGYQKTVLEIDTPKVEQVPIVDIMFTDFGEASQKFGFEVGPACFLG.

Residues 1–30 form the signal peptide; it reads MDVHTRWKAPRPGAPLLSSPLLLLLLLLWA. Residues 72-244 enclose the Laminin G-like domain; sequence DVAYRVSKDA…DYCEHYSPDC (173 aa). The interval 231-445 is nonhelical region; sequence RAAYDYCEHY…MPANQDTIYE (215 aa). Residues Tyr-234, Tyr-236, Tyr-240, Tyr-262, Tyr-263, Tyr-336, Tyr-338, and Tyr-344 each carry the sulfotyrosine modification. 2 disordered regions span residues 241–547 and 561–1576; these read SPDC…QESQ and GPAG…EVIQ. The span at 258–268 shows a compositional bias: acidic residues; the sequence is NPDEYYPEGEG. Low complexity-rich tracts occupy residues 335–352, 375–387, and 462–471; these read DYDY…PYED, PTST…SSNP, and IIEPGMLIEG. Positions 446-560 are interrupted collagenous region; sequence GIGGPRGEKG…ILQQARLALR (115 aa). Pro residues predominate over residues 472 to 487; that stretch reads PPGPEGPAGLPGPPGT. Low complexity-rich tracts occupy residues 508–525 and 561–572; these read LPGA…LMLP and GPAGPMGLTGRP. The triple-helical region stretch occupies residues 561–1572; the sequence is GPAGPMGLTG…GLPGPPGPPG (1012 aa). 3 positions are modified to 4-hydroxyproline: Pro-572, Pro-578, and Pro-623. A 5-hydroxylysine modification is found at Lys-629. The residue at position 641 (Pro-641) is a 4-hydroxyproline. A 5-hydroxylysine modification is found at Lys-644. 4-hydroxyproline is present on residues Pro-650, Pro-656, Pro-659, Pro-677, and Pro-680. A compositionally biased stretch (low complexity) spans 673-688; that stretch reads PRGLPGEPGPRGLLGP. Pro-682 and Pro-688 each carry 3-hydroxyproline. Residues 689–698 show a composition bias toward pro residues; that stretch reads KGPPGPPGPP. 4-hydroxyproline occurs at positions 692, 698, and 707. Lys-710 carries the 5-hydroxylysine modification. Pro-719, Pro-722, Pro-728, and Pro-734 each carry 4-hydroxyproline. Positions 724-743 are enriched in low complexity; the sequence is QQGNPGAQGLPGPQGAIGPP. Position 746 is a 5-hydroxylysine (Lys-746). Positions 749–758 are enriched in low complexity; sequence LGKPGLPGMP. 4-hydroxyproline is present on residues Pro-752, Pro-758, Pro-764, Pro-767, and Pro-773. 5-hydroxylysine is present on Lys-776. 4-hydroxyproline is present on residues Pro-782 and Pro-791. 5-hydroxylysine is present on residues Lys-797, Lys-806, Lys-809, and Lys-812. Pro-818 carries the 4-hydroxyproline modification. A 5-hydroxylysine modification is found at Lys-821. Residue Pro-836 is modified to 4-hydroxyproline. Residues 839 to 848 show a composition bias toward basic and acidic residues; sequence RGEDGPEGPK. 5-hydroxylysine occurs at positions 848 and 866. A 4-hydroxyproline mark is found at Pro-872, Pro-875, and Pro-878. Lys-884 carries the 5-hydroxylysine modification. Pro-890 and Pro-893 each carry 4-hydroxyproline. The residue at position 899 (Lys-899) is a 5-hydroxylysine. 2 positions are modified to 4-hydroxyproline: Pro-905 and Pro-908. A compositionally biased stretch (low complexity) spans 910-919; the sequence is PRGQRGPTGP. 4-hydroxyproline is present on residues Pro-932 and Pro-947. Composition is skewed to low complexity over residues 973-992 and 1001-1013; these read KDGL…QGKT and VGPQ…TGPM. 4-hydroxyproline occurs at positions 1019, 1022, 1025, and 1031. A compositionally biased stretch (low complexity) spans 1090 to 1106; the sequence is SPGERGPAGAAGPIGIP. Positions 1108–1117 are enriched in pro residues; sequence RPGPQGPPGP. Pro-1223 and Pro-1226 each carry 4-hydroxyproline. Residues 1261 to 1270 show a composition bias toward low complexity; the sequence is PSGAPGADGP. Over residues 1296–1305 the composition is skewed to gly residues; sequence GLPGEGGPLG. 2 stretches are compositionally biased toward pro residues: residues 1382–1400 and 1456–1471; these read TGEP…PGPA and SPGP…PPGL. 2 positions are modified to 4-hydroxyproline: Pro-1469 and Pro-1472. The span at 1487–1496 shows a compositional bias: low complexity; it reads PGLIGLIGPP. The span at 1528–1543 shows a compositional bias: pro residues; that stretch reads PLGPPGPPGLPGPPGP. Positions 1544 to 1556 are enriched in low complexity; that stretch reads KGAKGSSGPTGPK. The nonhelical region stretch occupies residues 1573–1607; the sequence is EVIQPLPIQASRTRRNIDASQLLDDGAGESYVDYA. Residues Tyr-1603 and Tyr-1606 each carry the sulfotyrosine modification. In terms of domain architecture, Fibrillar collagen NC1 spans 1611 to 1839; the sequence is EEIFGSLNSL…GFEVGPACFL (229 aa).

The protein belongs to the fibrillar collagen family. As to quaternary structure, trimers of two alpha 1(V) and one alpha 2(V) chains in most tissues and trimers of one alpha 1(V), one alpha 2(V), and one alpha 3(V) chains in placenta. Interacts with CSPG4. Post-translationally, prolines at the third position of the tripeptide repeating unit (G-X-Y) are hydroxylated in some or all of the chains. In terms of processing, sulfated on 40% of tyrosines. Hydroxylation on proline residues within the sequence motif, GXPG, is most likely to be 4-hydroxy as this fits the requirement for 4-hydroxylation in vertebrates. A high molecular weight form was detected in Schwann cells and peripheral nerve. A lower, probably processed form, is detected in all other tissues tested (at protein level).

The protein resides in the secreted. Its subcellular location is the extracellular space. The protein localises to the extracellular matrix. Type V collagen is a member of group I collagen (fibrillar forming collagen). It is a minor connective tissue component of nearly ubiquitous distribution. Type V collagen binds to DNA, heparan sulfate, thrombospondin, heparin, and insulin. This Rattus norvegicus (Rat) protein is Collagen alpha-1(V) chain (Col5a1).